The following is a 90-amino-acid chain: Putative septation protein SpoVG (90 aa).

This sequence belongs to the SpoVG family.

Its function is as follows. Could be involved in septation. The protein is Putative septation protein SpoVG of Clostridium perfringens (strain SM101 / Type A).